The primary structure comprises 263 residues: Trans-aconitate 2-methyltransferase (263 aa).

The protein belongs to the methyltransferase superfamily. Tam family.

The protein localises to the cytoplasm. The catalysed reaction is trans-aconitate + S-adenosyl-L-methionine = (E)-3-(methoxycarbonyl)pent-2-enedioate + S-adenosyl-L-homocysteine. Catalyzes the S-adenosylmethionine monomethyl esterification of trans-aconitate. The sequence is that of Trans-aconitate 2-methyltransferase from Mycobacterium ulcerans (strain Agy99).